The chain runs to 561 residues: DNA ligase B (561 aa).

The active-site N6-AMP-lysine intermediate is lysine 125.

This sequence belongs to the NAD-dependent DNA ligase family. LigB subfamily.

It catalyses the reaction NAD(+) + (deoxyribonucleotide)n-3'-hydroxyl + 5'-phospho-(deoxyribonucleotide)m = (deoxyribonucleotide)n+m + AMP + beta-nicotinamide D-nucleotide.. In terms of biological role, catalyzes the formation of phosphodiester linkages between 5'-phosphoryl and 3'-hydroxyl groups in double-stranded DNA using NAD as a coenzyme and as the energy source for the reaction. This chain is DNA ligase B, found in Salmonella arizonae (strain ATCC BAA-731 / CDC346-86 / RSK2980).